A 249-amino-acid chain; its full sequence is Proline-rich antigen (249 aa).

Composition is skewed to pro residues over residues 1 to 20 (MTDQ…PPPG) and 38 to 87 (YPPP…PPGP). Positions 1–87 (MTDQPPPSGS…GAYAPPPPGP (87 aa)) are disordered. Residues 34–43 (LGSAYPPPTA) form a 1-1; approximate repeat. Positions 34 to 85 (LGSAYPPPTAPPVGGSYPPPPPPGGSYPPPPPPGGSYPPPPPSTGAYAPPPP) are 5 X 10 AA tandem repeats of [PV]-G-G-S-Y-P-P-P-P-P. Repeat copies occupy residues 46–55 (VGGSYPPPPP), 56–65 (PGGSYPPPPP), and 66–75 (PGGSYPPPPP). One copy of the 1-5; approximate repeat lies at 76–85 (STGAYAPPPP). The 144-residue stretch at 99-242 (FWVTRVLAYV…KRQTLADKIM (144 aa)) folds into the RDD domain. A run of 2 repeats spans residues 101–123 (VTRV…IGML) and 134–156 (VTDI…IGML). Positions 101–156 (VTRVLAYVIDNIPATVLLGIGMLIQTLTKQEACVTDITQYNVNQYCATQPTGIGML) are 2 X 23 AA approximate repeats. Transmembrane regions (helical) follow at residues 104–124 (VLAY…GMLI), 151–171 (TGIG…YLVW), and 212–232 (LAHF…LWDS).

Belongs to the mycobacterial Pra family.

Its subcellular location is the cell membrane. In Mycobacterium leprae (strain TN), this protein is Proline-rich antigen (ag36).